A 1856-amino-acid chain; its full sequence is Golgi-specific brefeldin A-resistance guanine nucleotide exchange factor 1 (1856 aa).

The segment at 1–211 (MVDKNIYIIQ…EPKSYVGTNM (211 aa)) is DCB (dimerization and cyclophiln-binding); DCB:DCB domain and DCB:HUS domain interaction. The tract at residues 1-378 (MVDKNIYIIQ…SVHDMDYVNP (378 aa)) is interaction with RAB1B. Disordered regions lie at residues 215–256 (KMRA…NGAT) and 291–370 (DSGL…SASV). Basic residues predominate over residues 227–241 (WKKQKRSPRPPRHMT). A compositionally biased stretch (polar residues) spans 316–328 (RESTTTESGSNEI). S349 and S352 each carry phosphoserine. T505 carries the post-translational modification Phosphothreonine. An HUS (homology upstream of Sec7); DCB:HUS domain interaction region spans residues 528-548 (RIPSFVTELYINYDCDYYCAN). The segment at 601–626 (QEKKETSRPSYEAVDSTQEANSTERA) is disordered. Polar residues predominate over residues 615–625 (DSTQEANSTER). An SEC7 domain is found at 690-880 (ELIEIKNKKK…EDMYHAIKNE (191 aa)). Positions 884-1370 (MPEEQTGLVR…LSRPSPSPLV (487 aa)) are phosphatidylinositol-phosphate binding; required for translocation to the leading edge and for ARF1 activation upon GPCR signaling. Low complexity predominate over residues 1284–1294 (TARADAPDAGA). The interval 1284–1333 (TARADAPDAGAQSDSELPSYHQNDVSLDRGYTSDSEVYTDHGRPGKIHRS) is disordered. Residues 1295-1308 (QSDSELPSYHQNDV) show a composition bias toward polar residues. Position 1296 is a phosphoserine (S1296). A Phosphotyrosine modification is found at Y1314. S1316, S1318, and S1333 each carry phosphoserine. T1335 is modified (phosphothreonine; by AMPK). Disordered stretches follow at residues 1430–1484 (CKSQ…EGVP), 1739–1806 (THLT…PPLI), and 1837–1856 (PVPLLSTPRPTDPIPTSEVN). Residues 1432–1446 (SQDKRGKSHKYDSKG) are compositionally biased toward basic and acidic residues. 2 positions are modified to phosphoserine: S1475 and S1781. The segment covering 1775-1793 (SSSSPGSPVASSPSRLSPS) has biased composition (low complexity).

In terms of assembly, can form homodimers and probably homotetramers. Interacts with COPG1; the interaction is independent on ARF1 activation. Interacts with ARF1, ARF3, ARF4 and ARF5. Interacts with RAB1B (GTP-bound form); required for GBF1 membrane association. Interacts with GGA1, GGA2 and GGA3. Interacts with USO1. Interacts (via SEC7 domain) with PNPLA2 (via C-terminus); the interaction is direct. Can form homodimers and probably homotetramers. Interacts with COPG1; the interaction is independent on ARF1 activation. Interacts with ARF1, ARF3, ARF4 and ARF5. Interacts with RAB1B (GTP-bound form); required for GBF1 membrane association. Interacts with GGA1, GGA2 and GGA3. Interacts with USO1. Interacts (via SEC7 domain) with PNPLA2 (via C-terminus); the interaction is direct. Interacts with ARMH3.

It is found in the golgi apparatus. It localises to the cis-Golgi network. The protein resides in the endoplasmic reticulum-Golgi intermediate compartment. Its subcellular location is the trans-Golgi network. The protein localises to the cytoplasm. It is found in the lipid droplet. It localises to the membrane. Its activity is regulated as follows. Inhibited by brefeldin A (BFA). Inhibited by golgicide A (GCA). In terms of biological role, guanine-nucleotide exchange factor (GEF) for members of the Arf family of small GTPases involved in trafficking in the early secretory pathway; its GEF activity initiates the coating of nascent vesicles via the localized generation of activated ARFs through replacement of GDP with GTP. Recruitment to cis-Golgi membranes requires membrane association of Arf-GDP and can be regulated by ARF1, ARF3, ARF4 and ARF5. Involved in the recruitment of the COPI coat complex to cellular membranes such as the endoplasmic reticulum exit sites (ERES), and the endoplasmic reticulum-Golgi intermediate (ERGIC) and cis-Golgi compartments implicating ARF1 activation. Involved in COPI vesicle-dependent retrograde transport from the ERGIC and cis-Golgi compartments to the endoplasmic reticulum (ER). Involved in the trans-Golgi network recruitment of GGA1, GGA2, GGA3, BIG1, BIG2, and the AP-1 adaptor protein complex related to chlathrin-dependent transport; the function requires its GEF activity (probably at least in part on ARF4 and ARF5). Has GEF activity towards ARF1. Has in vitro GEF activity towards ARF5. Involved in the processing of PSAP. Required for the assembly of the Golgi apparatus. The AMPK-phosphorylated form is involved in Golgi disassembly during mitotis and under stress conditions. May be involved in the COPI vesicle-dependent recruitment of PNPLA2 to lipid droplets. In neutrophils, involved in G protein-coupled receptor (GPCR)-mediated chemotaxis und superoxide production. Proposed to be recruited by phosphatidylinositol-phosphates generated upon GPCR stimulation to the leading edge where it recruits and activates ARF1, and is involved in recruitment of GIT2 and the NADPH oxidase complex. Plays a role in maintaining mitochondrial morphology. This is Golgi-specific brefeldin A-resistance guanine nucleotide exchange factor 1 (GBF1) from Cricetulus griseus (Chinese hamster).